A 255-amino-acid chain; its full sequence is tRNA (guanine-N(7)-)-methyltransferase (255 aa).

Glu64, Glu89, Asp116, and Asp138 together coordinate S-adenosyl-L-methionine. Residue Asp138 is part of the active site. Substrate-binding positions include Lys142, Asp174, and 212-215 (TRYE).

Belongs to the class I-like SAM-binding methyltransferase superfamily. TrmB family.

It catalyses the reaction guanosine(46) in tRNA + S-adenosyl-L-methionine = N(7)-methylguanosine(46) in tRNA + S-adenosyl-L-homocysteine. It functions in the pathway tRNA modification; N(7)-methylguanine-tRNA biosynthesis. Functionally, catalyzes the formation of N(7)-methylguanine at position 46 (m7G46) in tRNA. The polypeptide is tRNA (guanine-N(7)-)-methyltransferase (Rhodospirillum rubrum (strain ATCC 11170 / ATH 1.1.1 / DSM 467 / LMG 4362 / NCIMB 8255 / S1)).